Consider the following 221-residue polypeptide: PKHD-type hydroxylase Pro_1271 (221 aa).

In terms of domain architecture, Fe2OG dioxygenase spans 80 to 174; the sequence is KVHGVMFSKS…RIVCVGWIQS (95 aa). Fe cation is bound by residues histidine 98, aspartate 100, and histidine 155. Position 165 (arginine 165) interacts with 2-oxoglutarate.

The cofactor is Fe(2+). It depends on L-ascorbate as a cofactor.

The polypeptide is PKHD-type hydroxylase Pro_1271 (Prochlorococcus marinus (strain SARG / CCMP1375 / SS120)).